Here is a 155-residue protein sequence, read N- to C-terminus: Protein E6 (155 aa).

2 zinc fingers span residues 33–69 (CVYC…CRVC) and 106–142 (CYRC…CLQC).

The protein belongs to the papillomaviridae E6 protein family. As to quaternary structure, forms homodimers. Interacts with ubiquitin-protein ligase UBE3A/E6-AP; this interaction stimulates UBE3A ubiquitin activity. Interacts with host TP53 and EP300; this interaction inhibits TP53 activity.

It localises to the host cytoplasm. The protein localises to the host nucleus. Its function is as follows. Plays a major role in the induction and maintenance of cellular transformation. E6 associates with host UBE3A/E6-AP ubiquitin-protein ligase and modulates its activity. Sequesters tumor suppressor TP53 in the host cytoplasm and modulates its activity by interacting with host EP300 that results in the reduction of TP53 acetylation and activation. In turn, apoptosis induced by DNA damage is inhibited. E6 also protects host keratinocytes from apoptosis by mediating the degradation of host BAK1. May also inhibit host immune response. The protein is Protein E6 of Homo sapiens (Human).